The chain runs to 229 residues: Urease accessory protein UreF (229 aa).

The protein belongs to the UreF family. As to quaternary structure, ureD, UreF and UreG form a complex that acts as a GTP-hydrolysis-dependent molecular chaperone, activating the urease apoprotein by helping to assemble the nickel containing metallocenter of UreC. The UreE protein probably delivers the nickel.

It localises to the cytoplasm. Its function is as follows. Required for maturation of urease via the functional incorporation of the urease nickel metallocenter. In Staphylococcus aureus (strain MRSA252), this protein is Urease accessory protein UreF.